The following is a 488-amino-acid chain: Cis-aconitate decarboxylase (488 aa).

This sequence belongs to the PrpD family. As to quaternary structure, homodimer. Expressed in LPS-tolerized macrophages (at protein level). Expressed in the luminal epithelial cells of pregnant uterus. Expressed in microglia and macrophage cells.

The protein localises to the mitochondrion. The catalysed reaction is cis-aconitate + H(+) = itaconate + CO2. Functionally, cis-aconitate decarboxylase that catalyzes production of itaconate and is involved in the inhibition of the inflammatory response. Acts as a negative regulator of the Toll-like receptors (TLRs)-mediated inflammatory innate response by stimulating the tumor necrosis factor alpha-induced protein TNFAIP3 expression via reactive oxygen species (ROS) in LPS-tolerized macrophages. Involved in antimicrobial response of innate immune cells; ACOD1-mediated itaconic acid production contributes to the antimicrobial activity of macrophages by generating itaconate, leading to alkylation of proteins, such as TFEB. Involved in antiviral response following infection by flavivirus in neurons: ACOD1-mediated itaconate production inhibits the activity of succinate dehydrogenase, generating a metabolic state in neurons that suppresses replication of viral genomes. Plays a role in the embryo implantation. The polypeptide is Cis-aconitate decarboxylase (Mus musculus (Mouse)).